A 256-amino-acid polypeptide reads, in one-letter code: Floral homeotic protein APETALA 1 (256 aa).

Positions 1–61 (MGRGRVQLKR…GKLFEYSTDS (61 aa)) constitute an MADS-box domain. One can recognise a K-box domain in the interval 88–178 (NTNWSMEYNR…SKQIKEREKI (91 aa)). Positions 184-206 (EQWDQQNHGHNMPPPPPPQQHQI) are disordered.

As to quaternary structure, homodimer capable of binding to CArG-box sequences.

It localises to the nucleus. Transcription factor that promotes early floral meristem identity in synergy with LEAFY. Displays a redundant function with CAULIFLOWER in the up-regulation of LEAFY. Required subsequently for the transition of an inflorescence meristem into a floral meristem, and for the normal development of sepals and petals in flowers. Regulates positively B class homeotic proteins. The chain is Floral homeotic protein APETALA 1 (AP1) from Arabidopsis lyrata subsp. lyrata (Lyre-leaved rock-cress).